The sequence spans 174 residues: Crossover junction endodeoxyribonuclease RuvC (174 aa).

Active-site residues include D8, E67, and D139. D8, E67, and D139 together coordinate Mg(2+).

This sequence belongs to the RuvC family. Homodimer which binds Holliday junction (HJ) DNA. The HJ becomes 2-fold symmetrical on binding to RuvC with unstacked arms; it has a different conformation from HJ DNA in complex with RuvA. In the full resolvosome a probable DNA-RuvA(4)-RuvB(12)-RuvC(2) complex forms which resolves the HJ. Requires Mg(2+) as cofactor.

Its subcellular location is the cytoplasm. It carries out the reaction Endonucleolytic cleavage at a junction such as a reciprocal single-stranded crossover between two homologous DNA duplexes (Holliday junction).. Functionally, the RuvA-RuvB-RuvC complex processes Holliday junction (HJ) DNA during genetic recombination and DNA repair. Endonuclease that resolves HJ intermediates. Cleaves cruciform DNA by making single-stranded nicks across the HJ at symmetrical positions within the homologous arms, yielding a 5'-phosphate and a 3'-hydroxyl group; requires a central core of homology in the junction. The consensus cleavage sequence is 5'-(A/T)TT(C/G)-3'. Cleavage occurs on the 3'-side of the TT dinucleotide at the point of strand exchange. HJ branch migration catalyzed by RuvA-RuvB allows RuvC to scan DNA until it finds its consensus sequence, where it cleaves and resolves the cruciform DNA. The protein is Crossover junction endodeoxyribonuclease RuvC of Pseudomonas syringae pv. syringae (strain B728a).